Reading from the N-terminus, the 546-residue chain is Protein HydE (546 aa).

The chain is Protein HydE (hydE) from Wolinella succinogenes (strain ATCC 29543 / DSM 1740 / CCUG 13145 / JCM 31913 / LMG 7466 / NCTC 11488 / FDC 602W) (Vibrio succinogenes).